A 156-amino-acid chain; its full sequence is Ribosomal RNA large subunit methyltransferase H (156 aa).

S-adenosyl-L-methionine-binding positions include Leu-73, Gly-104, and 123–128; that span reads LSDLTL.

This sequence belongs to the RNA methyltransferase RlmH family. In terms of assembly, homodimer.

The protein resides in the cytoplasm. The catalysed reaction is pseudouridine(1915) in 23S rRNA + S-adenosyl-L-methionine = N(3)-methylpseudouridine(1915) in 23S rRNA + S-adenosyl-L-homocysteine + H(+). Specifically methylates the pseudouridine at position 1915 (m3Psi1915) in 23S rRNA. This is Ribosomal RNA large subunit methyltransferase H from Leptothrix cholodnii (strain ATCC 51168 / LMG 8142 / SP-6) (Leptothrix discophora (strain SP-6)).